We begin with the raw amino-acid sequence, 529 residues long: Bifunctional purine biosynthesis protein PurH (529 aa).

Residues 1–148 enclose the MGS-like domain; that stretch reads MQQRRPVRRA…KNHKDVAIVV (148 aa).

It belongs to the PurH family.

The catalysed reaction is (6R)-10-formyltetrahydrofolate + 5-amino-1-(5-phospho-beta-D-ribosyl)imidazole-4-carboxamide = 5-formamido-1-(5-phospho-D-ribosyl)imidazole-4-carboxamide + (6S)-5,6,7,8-tetrahydrofolate. It carries out the reaction IMP + H2O = 5-formamido-1-(5-phospho-D-ribosyl)imidazole-4-carboxamide. It participates in purine metabolism; IMP biosynthesis via de novo pathway; 5-formamido-1-(5-phospho-D-ribosyl)imidazole-4-carboxamide from 5-amino-1-(5-phospho-D-ribosyl)imidazole-4-carboxamide (10-formyl THF route): step 1/1. Its pathway is purine metabolism; IMP biosynthesis via de novo pathway; IMP from 5-formamido-1-(5-phospho-D-ribosyl)imidazole-4-carboxamide: step 1/1. The protein is Bifunctional purine biosynthesis protein PurH of Salmonella heidelberg (strain SL476).